A 715-amino-acid polypeptide reads, in one-letter code: Fatty acid oxidation complex subunit alpha (715 aa).

The interval 1-190 is enoyl-CoA hydratase/isomerase; that stretch reads MIYQGKAITV…KVGAVDAVVA (190 aa). Aspartate 297 serves as a coordination point for substrate. Residues 312–715 form a 3-hydroxyacyl-CoA dehydrogenase region; that stretch reads HDAKQAAVLG…MAKNGQRFFN (404 aa). Residues methionine 325, aspartate 344, 401-403, lysine 408, and serine 430 contribute to the NAD(+) site; that span reads VVE. Histidine 451 acts as the For 3-hydroxyacyl-CoA dehydrogenase activity in catalysis. NAD(+) is bound at residue asparagine 454. The substrate site is built by asparagine 501 and tyrosine 660.

In the N-terminal section; belongs to the enoyl-CoA hydratase/isomerase family. This sequence in the C-terminal section; belongs to the 3-hydroxyacyl-CoA dehydrogenase family. In terms of assembly, heterotetramer of two alpha chains (FadB) and two beta chains (FadA).

The enzyme catalyses a (3S)-3-hydroxyacyl-CoA + NAD(+) = a 3-oxoacyl-CoA + NADH + H(+). It carries out the reaction a (3S)-3-hydroxyacyl-CoA = a (2E)-enoyl-CoA + H2O. The catalysed reaction is a 4-saturated-(3S)-3-hydroxyacyl-CoA = a (3E)-enoyl-CoA + H2O. It catalyses the reaction (3S)-3-hydroxybutanoyl-CoA = (3R)-3-hydroxybutanoyl-CoA. The enzyme catalyses a (3Z)-enoyl-CoA = a 4-saturated (2E)-enoyl-CoA. It carries out the reaction a (3E)-enoyl-CoA = a 4-saturated (2E)-enoyl-CoA. It functions in the pathway lipid metabolism; fatty acid beta-oxidation. In terms of biological role, involved in the aerobic and anaerobic degradation of long-chain fatty acids via beta-oxidation cycle. Catalyzes the formation of 3-oxoacyl-CoA from enoyl-CoA via L-3-hydroxyacyl-CoA. It can also use D-3-hydroxyacyl-CoA and cis-3-enoyl-CoA as substrate. This Ectopseudomonas oleovorans (Pseudomonas oleovorans) protein is Fatty acid oxidation complex subunit alpha.